We begin with the raw amino-acid sequence, 200 residues long: FMN-dependent NADH:quinone oxidoreductase (200 aa).

FMN is bound by residues serine 10 and 95–98 (MYNF).

It belongs to the azoreductase type 1 family. Homodimer. The cofactor is FMN.

It catalyses the reaction 2 a quinone + NADH + H(+) = 2 a 1,4-benzosemiquinone + NAD(+). The enzyme catalyses N,N-dimethyl-1,4-phenylenediamine + anthranilate + 2 NAD(+) = 2-(4-dimethylaminophenyl)diazenylbenzoate + 2 NADH + 2 H(+). Functionally, quinone reductase that provides resistance to thiol-specific stress caused by electrophilic quinones. Also exhibits azoreductase activity. Catalyzes the reductive cleavage of the azo bond in aromatic azo compounds to the corresponding amines. In Alteromonas mediterranea (strain DSM 17117 / CIP 110805 / LMG 28347 / Deep ecotype), this protein is FMN-dependent NADH:quinone oxidoreductase.